We begin with the raw amino-acid sequence, 374 residues long: Chaperone protein DnaJ (374 aa).

Residues 5-70 enclose the J domain; that stretch reads DYYDVLGVAK…DKRAAYDRFG (66 aa). Residues 131 to 209 form a CR-type zinc finger; the sequence is GCEEKIRIPT…CHGQGRVQEY (79 aa). Zn(2+) contacts are provided by Cys144, Cys147, Cys161, Cys164, Cys183, Cys186, Cys197, and Cys200. 4 CXXCXGXG motif repeats span residues 144-151, 161-168, 183-190, and 197-204; these read CKTCDGSG, CGTCGGAG, CPECHGAG, and CRDCHGQG.

This sequence belongs to the DnaJ family. Homodimer. The cofactor is Zn(2+).

It localises to the cytoplasm. Its function is as follows. Participates actively in the response to hyperosmotic and heat shock by preventing the aggregation of stress-denatured proteins and by disaggregating proteins, also in an autonomous, DnaK-independent fashion. Unfolded proteins bind initially to DnaJ; upon interaction with the DnaJ-bound protein, DnaK hydrolyzes its bound ATP, resulting in the formation of a stable complex. GrpE releases ADP from DnaK; ATP binding to DnaK triggers the release of the substrate protein, thus completing the reaction cycle. Several rounds of ATP-dependent interactions between DnaJ, DnaK and GrpE are required for fully efficient folding. Also involved, together with DnaK and GrpE, in the DNA replication of plasmids through activation of initiation proteins. The polypeptide is Chaperone protein DnaJ (Marinomonas sp. (strain MWYL1)).